The chain runs to 712 residues: Patatin-like phospholipase domain-containing protein ACLA_029670 (712 aa).

Residues 1–10 (MTSAEKSATR) show a composition bias toward polar residues. Residues 1-20 (MTSAEKSATRNIYDPSALPD) are disordered. A helical transmembrane segment spans residues 85–105 (WPFLFIVFAWITVLGIAYALT). The PNPLA domain occupies 275 to 466 (LCLSGGATFA…RTDIPIKALN (192 aa)). The GXSXG motif lies at 306-310 (GTSGG). S308 serves as the catalytic Nucleophile. D453 functions as the Proton acceptor in the catalytic mechanism. Residues 649–664 (FPERHSDYKDESHYTE) show a composition bias toward basic and acidic residues. The interval 649-686 (FPERHSDYKDESHYTEVSDSLSTNSSRPHTPDARRGSI) is disordered. The segment covering 665-676 (VSDSLSTNSSRP) has biased composition (polar residues). The span at 677-686 (HTPDARRGSI) shows a compositional bias: basic and acidic residues.

This sequence belongs to the PLPL family.

The protein localises to the membrane. Functionally, probable lipid hydrolase. The sequence is that of Patatin-like phospholipase domain-containing protein ACLA_029670 from Aspergillus clavatus (strain ATCC 1007 / CBS 513.65 / DSM 816 / NCTC 3887 / NRRL 1 / QM 1276 / 107).